The sequence spans 67 residues: Large ribosomal subunit protein bL35 (67 aa).

Belongs to the bacterial ribosomal protein bL35 family.

The chain is Large ribosomal subunit protein bL35 from Paramagnetospirillum magneticum (strain ATCC 700264 / AMB-1) (Magnetospirillum magneticum).